A 172-amino-acid chain; its full sequence is Male-specific submandibular salivary gland protein (172 aa).

The first 15 residues, 1 to 15 (MVKFLLLALALGVSC), serve as a signal peptide directing secretion. Asn-41 is a glycosylation site (N-linked (GlcNAc...) asparagine). 2 disulfide bridges follow: Cys-60–Cys-64 and Cys-79–Cys-170.

This sequence belongs to the calycin superfamily. Lipocalin family. Post-translationally, N-glycosylated. Expressed in acinar cells of the submandibular salivary gland from where it is secreted into saliva (at protein level). Also released from the submandibular salivary gland into blood and excreted in urine (at protein level). Expressed in the lacrimal gland from where it is secreted into tears (at protein level).

It is found in the secreted. Its subcellular location is the cytoplasm. This Mesocricetus auratus (Golden hamster) protein is Male-specific submandibular salivary gland protein.